The following is a 570-amino-acid chain: MNVVFAVKQYISKMIEDSGPGMKVLLMDKETTGIVSMVYTQSEILQKEVYLFERIDSQNREIMKHLKAICFLRPTKENVEYLIQELRRPKYSIYFIYFSNVISKSDVKSLAEADEQEVVAEVQEFYGDYIAVNPHLFSLNILGCCQGRNWDPAQLSRTTQGLTALLLSLKKCPMIRYQLSSEAAKRLGECVKQVISKEYELFEFRRTEVPPLLLILDRCDDAITPLLNQWTYQAMVHELLGINNNRIDLSRVPGISKDLREVVLSAENDEFYANNMYLNFAEIGSNIKNLMEDFQKKRPKEQQKLESIADMKAFVENYPQFKKMSGTVSKHVTVVGELSRLVSERNLLEVSEVEQELACQNDHSSALQNVKRLLQNPKVTEFDAVRLVMLYALHYERHSSNSLPGLIVDLRSKGVAEKYRKLVSAVVEYGGKRVRGSDLFSPKDAVAITKQFLKGLKGVENVYTQHQPFLHETLDHLIKGRLKENLYPYLGPSTLRDRPQDIIVFIIGGATYEEALTVYNLNRTTPGVRIVLGGTTIHNTKSFLEEVLASGLHSRSRESSQATSRSANRR.

Phosphoserine occurs at positions 307 and 441.

The protein belongs to the STXBP/unc-18/SEC1 family. Interacts with ZFYVE20. Interacts with STX6.

The protein resides in the golgi apparatus membrane. Its subcellular location is the endosome membrane. In terms of biological role, may play a role in vesicle-mediated protein trafficking from the Golgi stack through the trans-Golgi network. The chain is Vacuolar protein sorting-associated protein 45 (Vps45) from Mus musculus (Mouse).